The primary structure comprises 536 residues: 2-isopropylmalate synthase (536 aa).

A Pyruvate carboxyltransferase domain is found at Val-8–Thr-273. The Mn(2+) site is built by Asp-17, His-208, His-210, and Asn-244. The interval Lys-408–Leu-536 is regulatory domain.

It belongs to the alpha-IPM synthase/homocitrate synthase family. LeuA type 1 subfamily. Homodimer. Requires Mn(2+) as cofactor.

It localises to the cytoplasm. The catalysed reaction is 3-methyl-2-oxobutanoate + acetyl-CoA + H2O = (2S)-2-isopropylmalate + CoA + H(+). Its pathway is amino-acid biosynthesis; L-leucine biosynthesis; L-leucine from 3-methyl-2-oxobutanoate: step 1/4. Catalyzes the condensation of the acetyl group of acetyl-CoA with 3-methyl-2-oxobutanoate (2-ketoisovalerate) to form 3-carboxy-3-hydroxy-4-methylpentanoate (2-isopropylmalate). The polypeptide is 2-isopropylmalate synthase (Prochlorococcus marinus (strain SARG / CCMP1375 / SS120)).